The primary structure comprises 118 residues: uncharacterized protein (118 aa).

Transmembrane regions (helical) follow at residues 17–37, 60–80, and 90–110; these read IIII…FAIL, INYT…IMIF, and YIEQ…GSFW.

Its subcellular location is the membrane. This is an uncharacterized protein from Acanthamoeba polyphaga mimivirus (APMV).